A 188-amino-acid polypeptide reads, in one-letter code: Early nodulin-like protein 5 (188 aa).

The signal sequence occupies residues 1–24; it reads MDSSKKIIIVMFLVTFYMFSCVSS. One can recognise a Phytocyanin domain in the interval 25–128; sequence TEFEVGGENG…GQKMIVKVME (104 aa). An intrachain disulfide couples Cys82 to Cys116. The segment at 127–157 is disordered; that stretch reads METESSTESPPPSSSSSSSSSSSLPASTPKA. Over residues 129–155 the composition is skewed to low complexity; sequence TESSTESPPPSSSSSSSSSSSLPASTP. Ser170 carries GPI-anchor amidated serine lipidation. Residues 171–188 constitute a propeptide, removed in mature form; the sequence is SSGFVVSAVLIVSVFGLV.

This sequence belongs to the early nodulin-like (ENODL) family. Mostly expressed in leaves and flowers, and, to a lower extent, in stems.

The protein localises to the cell membrane. Its function is as follows. May act as a carbohydrate transporter. Mainly required for reproductive functions. In Arabidopsis thaliana (Mouse-ear cress), this protein is Early nodulin-like protein 5.